The chain runs to 179 residues: DELTA-actitoxin-Afr1a (179 aa).

Residues 1–29 (SADVAGAVIDGAGLGFDVLKTVLEALGNV) are N-terminal alpha-helix that contributes to the pore. Arginine 31 is a binding site for an N-(acyl)-sphingosylphosphocholine. Tyrosine 51 and arginine 53 together coordinate N-acetyl-D-glucosamine 6-sulfate. An N-(acyl)-sphingosylphosphocholine-binding residues include arginine 53, serine 54, arginine 79, glycine 85, tyrosine 108, tyrosine 113, serine 114, tryptophan 116, tyrosine 133, tyrosine 137, tyrosine 138, arginine 144, and glycine 168. The segment at 105 to 120 (SVPYDYNWYSNWWNVR) is trp-rich region, which is important for the binding to lipid membrane. N-acetyl-D-glucosamine 6-sulfate is bound at residue tyrosine 138. Residues 144–146 (RGD) carry the Cell attachment site, crucial for protein stability motif.

The protein belongs to the actinoporin family. Sea anemone subfamily. In terms of assembly, octamer or nonamer in membranes. Monomer in the soluble state.

The protein resides in the secreted. It localises to the nematocyst. Its subcellular location is the target cell membrane. Pore-forming toxin (PFT) that consists of a crown-shaped octamer or nonamer that forms cation-selective hydrophilic pores of about 1.5 nm (inside) and 13 nm (outside). It causes cardiac stimulation and cytolysis (EC(50)=1.6 nM on erythrocytes). Interestingly, the Phe-16 is crucial for hemolysis. Pore formation is a multi-step process that involves specific recognition of membrane sphingomyelin (but neither cholesterol nor phosphatidylcholine) using aromatic rich region and adjacent phosphocholine (POC) binding site, firm binding to the membrane (mainly driven by hydrophobic interactions) accompanied by the transfer of the N-terminal region to the lipid-water interface and finally pore formation after oligomerization of monomers. It is probable that a dimeric form is an assembly intermediate before the complete oligomerization. The formation of stable pores occurs only in vesicles composed of DOPC/SM (there is no oligomerization when the PFT is treated with vesicles of DOPC or SM alone). The transmembrane pore displays 8 lateral perforations, one at each subunit-subunit interface, partially occupied by the acyl-chain region of a bridging lipid. Each pore contains 24 lipid molecules, firmly bound to each subunit, that is, 3 lipids (L1, L2, L3, L4 and/or L5) are associated to each subunit. Lipid L1 bridges 2 subunits, whereas lipids L2 and L3 bind to sites at single subunit. This is DELTA-actitoxin-Afr1a from Actinia fragacea (Strawberry anemone).